The sequence spans 147 residues: Large ribosomal subunit protein bL9 (147 aa).

This sequence belongs to the bacterial ribosomal protein bL9 family.

Its function is as follows. Binds to the 23S rRNA. In Thermoanaerobacter pseudethanolicus (strain ATCC 33223 / 39E) (Clostridium thermohydrosulfuricum), this protein is Large ribosomal subunit protein bL9.